We begin with the raw amino-acid sequence, 461 residues long: Ubiquinone hydroxylase UbiM (461 aa).

Belongs to the UbiH/COQ6 family. FAD serves as cofactor.

It catalyses the reaction a 2-(all-trans-polyprenyl)phenol + NADPH + O2 + H(+) = a 3-(all-trans-polyprenyl)benzene-1,2-diol + NADP(+) + H2O. The catalysed reaction is a 5-methoxy-2-methyl-3-(all-trans-polyprenyl)benzene-1,4-diol + AH2 + O2 = a 3-demethylubiquinol + A + H2O. It functions in the pathway cofactor biosynthesis; ubiquinone biosynthesis. Catalyzes the hydroxylation of three positions of the aromatic ring during ubiquinone biosynthesis. This chain is Ubiquinone hydroxylase UbiM, found in Neisseria meningitidis serogroup C / serotype 2a (strain ATCC 700532 / DSM 15464 / FAM18).